A 235-amino-acid polypeptide reads, in one-letter code: MGNKSKAYKAAAEKIDKGRLYTPLKAAELVKETSSKNCDATVDVAIRLGVDPRKADQLVRGTVSLPNGTGKSVRVAVFAEGEKATEAQAAGADIVGTTELIEQITAGTIEFDVAIATPDQMAKVGRVARVLGPRGLMPNPKTGTVTNDVAKAIAEVKGGKISFRVDKASNLHAIIGKASFDAEKLAENYGALLDEINRIKPSSAKGIYVKKVTLTSTFGPGVPVDPSIQKNYTQA.

Belongs to the universal ribosomal protein uL1 family. As to quaternary structure, part of the 50S ribosomal subunit.

Functionally, binds directly to 23S rRNA. The L1 stalk is quite mobile in the ribosome, and is involved in E site tRNA release. Protein L1 is also a translational repressor protein, it controls the translation of the L11 operon by binding to its mRNA. This chain is Large ribosomal subunit protein uL1, found in Corynebacterium diphtheriae (strain ATCC 700971 / NCTC 13129 / Biotype gravis).